Here is a 294-residue protein sequence, read N- to C-terminus: MPRGPGSLLLLVLASHCCLGSARGLFFGQPDFSYKRSNCKPIPANLQLCHGIEYQNMRLPNLLGHETMKEVLEQAGAWIPLVMKQCHPDTKKFLCSLFAPVCLDDLDETIQPCHSLCVQVKDRCAPVMSAFGFPWPDMLECDRFPQDNDLCIPLASSDHLLPATEEAPKVCEACKNKNEDDNDIMETLCKNDFALKIKVKEITYINRDTKIILETKSKTIYKLNGVSERDLKKSVLWLKDSLQCTCEEMNDINAPYLVMGQKLGGELVITSVKRWQKGQREFKRISRSIRKLQC.

The signal sequence occupies residues 1–24 (MPRGPGSLLLLVLASHCCLGSARG). Residues 34–154 (YKRSNCKPIP…PQDNDLCIPL (121 aa)) enclose the FZ domain. Intrachain disulfides connect Cys-39/Cys-102, Cys-49/Cys-95, Cys-86/Cys-124, Cys-113/Cys-151, Cys-117/Cys-141, Cys-171/Cys-244, Cys-174/Cys-246, and Cys-189/Cys-294. Positions 171–294 (CEACKNKNED…ISRSIRKLQC (124 aa)) constitute an NTR domain.

Belongs to the secreted frizzled-related protein (sFRP) family.

The protein localises to the secreted. Soluble frizzled-related proteins (sFRPS) function as modulators of Wnt signaling through direct interaction with Wnts. They have a role in regulating cell growth and differentiation in specific cell types. SFRP2 may be important for eye retinal development and for myogenesis. The polypeptide is Secreted frizzled-related protein 2 (SFRP2) (Canis lupus familiaris (Dog)).